A 190-amino-acid chain; its full sequence is Endoribonuclease YbeY (190 aa).

The tract at residues 1-25 is disordered; it reads MSQPRPGHRPDCNGADPDSNFASMT. The Zn(2+) site is built by His-147, His-151, and His-157.

The protein belongs to the endoribonuclease YbeY family. Requires Zn(2+) as cofactor.

It is found in the cytoplasm. Functionally, single strand-specific metallo-endoribonuclease involved in late-stage 70S ribosome quality control and in maturation of the 3' terminus of the 16S rRNA. This chain is Endoribonuclease YbeY, found in Rhodopseudomonas palustris (strain ATCC BAA-98 / CGA009).